The sequence spans 205 residues: Histidine biosynthesis bifunctional protein HisIE (205 aa).

A phosphoribosyl-AMP cyclohydrolase region spans residues 1–116 (MLKLKFNEEG…KVEKPLPFEV (116 aa)). The segment at 117-205 (LPRLQDVIRE…VMEELIRRFK (89 aa)) is phosphoribosyl-ATP pyrophosphohydrolase.

The protein in the N-terminal section; belongs to the PRA-CH family. This sequence in the C-terminal section; belongs to the PRA-PH family.

The protein resides in the cytoplasm. It carries out the reaction 1-(5-phospho-beta-D-ribosyl)-ATP + H2O = 1-(5-phospho-beta-D-ribosyl)-5'-AMP + diphosphate + H(+). The enzyme catalyses 1-(5-phospho-beta-D-ribosyl)-5'-AMP + H2O = 1-(5-phospho-beta-D-ribosyl)-5-[(5-phospho-beta-D-ribosylamino)methylideneamino]imidazole-4-carboxamide. It functions in the pathway amino-acid biosynthesis; L-histidine biosynthesis; L-histidine from 5-phospho-alpha-D-ribose 1-diphosphate: step 2/9. It participates in amino-acid biosynthesis; L-histidine biosynthesis; L-histidine from 5-phospho-alpha-D-ribose 1-diphosphate: step 3/9. The protein is Histidine biosynthesis bifunctional protein HisIE (hisI) of Aquifex aeolicus (strain VF5).